Reading from the N-terminus, the 65-residue chain is Light-harvesting protein B-800-850 alpha chain C (65 aa).

Residues 1 to 11 (MNQGRIWTVVS) are Cytoplasmic-facing. Residues 12 to 35 (PTVGLPLLLGSVAAIAFAVHFAVL) form a helical membrane-spanning segment. His-31 is an a bacteriochlorophyll binding site. Residues 36–65 (ENTSWVAAFMNGKSVAAAPAPAAPAAPAKK) lie on the Periplasmic side of the membrane.

Belongs to the antenna complex alpha subunit family. As to quaternary structure, the core complex is formed by different alpha and beta chains, binding bacteriochlorophyll molecules, and arranged most probably in tetrameric structures disposed around the reaction center. The non-pigmented gamma chains may constitute additional components.

It is found in the cell inner membrane. Functionally, antenna complexes are light-harvesting systems, which transfer the excitation energy to the reaction centers. This is Light-harvesting protein B-800-850 alpha chain C (pucAC) from Rhodopseudomonas palustris.